Consider the following 361-residue polypeptide: Chorismate synthase (361 aa).

The NADP(+) site is built by Arg48 and Arg54. FMN contacts are provided by residues 125–127, 238–239, Gly278, 293–297, and Arg319; these read RSS, NA, and KPTSS.

It belongs to the chorismate synthase family. Homotetramer. The cofactor is FMNH2.

It carries out the reaction 5-O-(1-carboxyvinyl)-3-phosphoshikimate = chorismate + phosphate. Its pathway is metabolic intermediate biosynthesis; chorismate biosynthesis; chorismate from D-erythrose 4-phosphate and phosphoenolpyruvate: step 7/7. Its function is as follows. Catalyzes the anti-1,4-elimination of the C-3 phosphate and the C-6 proR hydrogen from 5-enolpyruvylshikimate-3-phosphate (EPSP) to yield chorismate, which is the branch point compound that serves as the starting substrate for the three terminal pathways of aromatic amino acid biosynthesis. This reaction introduces a second double bond into the aromatic ring system. The sequence is that of Chorismate synthase from Escherichia coli O139:H28 (strain E24377A / ETEC).